Consider the following 267-residue polypeptide: Undecaprenyl-diphosphatase 2 (267 aa).

8 helical membrane passes run 4–24 (IYFI…FLPI), 43–63 (EEKV…CWLF), 84–104 (FAVI…LFIH), 109–129 (VLFN…IILW), 147–167 (IGFK…IPGT), 186–206 (AATE…AIYD), 219–239 (ILAI…VVNA), and 243–263 (FVAK…GLII).

Belongs to the UppP family.

It is found in the cell inner membrane. It carries out the reaction di-trans,octa-cis-undecaprenyl diphosphate + H2O = di-trans,octa-cis-undecaprenyl phosphate + phosphate + H(+). Its function is as follows. Catalyzes the dephosphorylation of undecaprenyl diphosphate (UPP). Confers resistance to bacitracin. The chain is Undecaprenyl-diphosphatase 2 from Shewanella oneidensis (strain ATCC 700550 / JCM 31522 / CIP 106686 / LMG 19005 / NCIMB 14063 / MR-1).